Here is a 123-residue protein sequence, read N- to C-terminus: uncharacterized protein (123 aa).

To insertion element IS1016 transposase.

This is an uncharacterized protein from Haemophilus influenzae (strain ATCC 51907 / DSM 11121 / KW20 / Rd).